We begin with the raw amino-acid sequence, 129 residues long: Small ribosomal subunit protein uS11 (129 aa).

This sequence belongs to the universal ribosomal protein uS11 family. Part of the 30S ribosomal subunit. Interacts with proteins S7 and S18. Binds to IF-3.

Located on the platform of the 30S subunit, it bridges several disparate RNA helices of the 16S rRNA. Forms part of the Shine-Dalgarno cleft in the 70S ribosome. This is Small ribosomal subunit protein uS11 from Bacillus anthracis (strain A0248).